Consider the following 289-residue polypeptide: MIRIAIPNKGRLHEPTMSLFKDAGLPISGGAESRILFAKTTDPDIHILFARAADIPEYVQDGAADVGVTGMDLITERGADVEALLDLKYGKASLVLAVPEESVFQSARDLEGKKVATEFPEITRQYFKNLGITVEVITVSGACEMTPHVGIADAIVDISSSGTTLLINHLKAIDTVFSSTVHLIANKKSLKEKGKILDIKTALESVLNAKKKRYLMMNVPEASLQAVKEVLPGMSGPTVMKVESSRSSEESFLAVHSVVDADLIFTIVNKLKNVGARDILVVPIERIMP.

This sequence belongs to the ATP phosphoribosyltransferase family. Long subfamily. Mg(2+) is required as a cofactor.

Its subcellular location is the cytoplasm. The enzyme catalyses 1-(5-phospho-beta-D-ribosyl)-ATP + diphosphate = 5-phospho-alpha-D-ribose 1-diphosphate + ATP. It participates in amino-acid biosynthesis; L-histidine biosynthesis; L-histidine from 5-phospho-alpha-D-ribose 1-diphosphate: step 1/9. With respect to regulation, feedback inhibited by histidine. Functionally, catalyzes the condensation of ATP and 5-phosphoribose 1-diphosphate to form N'-(5'-phosphoribosyl)-ATP (PR-ATP). Has a crucial role in the pathway because the rate of histidine biosynthesis seems to be controlled primarily by regulation of HisG enzymatic activity. This Methanosarcina acetivorans (strain ATCC 35395 / DSM 2834 / JCM 12185 / C2A) protein is ATP phosphoribosyltransferase.